Here is a 319-residue protein sequence, read N- to C-terminus: Acetyl-coenzyme A carboxylase carboxyl transferase subunit alpha (319 aa).

The 262-residue stretch at 34–295 folds into the CoA carboxyltransferase C-terminal domain; sequence ELEEEVSKLK…KVRLKRDLAD (262 aa).

It belongs to the AccA family. In terms of assembly, acetyl-CoA carboxylase is a heterohexamer composed of biotin carboxyl carrier protein (AccB), biotin carboxylase (AccC) and two subunits each of ACCase subunit alpha (AccA) and ACCase subunit beta (AccD).

It localises to the cytoplasm. The catalysed reaction is N(6)-carboxybiotinyl-L-lysyl-[protein] + acetyl-CoA = N(6)-biotinyl-L-lysyl-[protein] + malonyl-CoA. It functions in the pathway lipid metabolism; malonyl-CoA biosynthesis; malonyl-CoA from acetyl-CoA: step 1/1. Functionally, component of the acetyl coenzyme A carboxylase (ACC) complex. First, biotin carboxylase catalyzes the carboxylation of biotin on its carrier protein (BCCP) and then the CO(2) group is transferred by the carboxyltransferase to acetyl-CoA to form malonyl-CoA. The sequence is that of Acetyl-coenzyme A carboxylase carboxyl transferase subunit alpha from Pseudoalteromonas translucida (strain TAC 125).